We begin with the raw amino-acid sequence, 63 residues long: Kappa-theraphotoxin-Gr3a (63 aa).

The first 21 residues, 1–21 (MKTSVFVLVLGLVLLFAVSFA), serve as a signal peptide directing secretion. A propeptide spanning residues 22–29 (TEMEESAR) is cleaved from the precursor. Cystine bridges form between Cys-31-Cys-45, Cys-38-Cys-50, and Cys-44-Cys-57.

It belongs to the neurotoxin 10 (Hwtx-1) family. 63 (VsTx1) subfamily. Expressed by the venom gland.

Its subcellular location is the secreted. In terms of biological role, inhibits sodium channels Nav1.7/SCN9A and potassium channels Kv11.1/KCNH2. Also binds the voltage-sensor domain of the potassium channel KvAP (from the archaeon Aeropyrum pernix) with very slow apparent binding kinetics and affects channel gating. Reaches its target by dynamically partitioning into anionic or zwitterionic headgroup lipid membranes. May bind to the open state of KvAP. This Grammostola rosea (Chilean rose tarantula) protein is Kappa-theraphotoxin-Gr3a.